Reading from the N-terminus, the 904-residue chain is Alanine--tRNA ligase (904 aa).

Zn(2+)-binding residues include His-584, His-588, Cys-687, and His-691.

It belongs to the class-II aminoacyl-tRNA synthetase family. Zn(2+) is required as a cofactor.

It localises to the cytoplasm. It carries out the reaction tRNA(Ala) + L-alanine + ATP = L-alanyl-tRNA(Ala) + AMP + diphosphate. Its function is as follows. Catalyzes the attachment of alanine to tRNA(Ala) in a two-step reaction: alanine is first activated by ATP to form Ala-AMP and then transferred to the acceptor end of tRNA(Ala). Also edits incorrectly charged Ser-tRNA(Ala) and Gly-tRNA(Ala) via its editing domain. This Mycobacterium bovis (strain ATCC BAA-935 / AF2122/97) protein is Alanine--tRNA ligase.